A 560-amino-acid polypeptide reads, in one-letter code: DNA ligase B (560 aa).

The active-site N6-AMP-lysine intermediate is the K128.

Belongs to the NAD-dependent DNA ligase family. LigB subfamily.

The catalysed reaction is NAD(+) + (deoxyribonucleotide)n-3'-hydroxyl + 5'-phospho-(deoxyribonucleotide)m = (deoxyribonucleotide)n+m + AMP + beta-nicotinamide D-nucleotide.. In terms of biological role, catalyzes the formation of phosphodiester linkages between 5'-phosphoryl and 3'-hydroxyl groups in double-stranded DNA using NAD as a coenzyme and as the energy source for the reaction. The chain is DNA ligase B from Azotobacter vinelandii (strain DJ / ATCC BAA-1303).